The chain runs to 217 residues: ATP-dependent Clp protease proteolytic subunit 1 (217 aa).

The interval 1–24 (MTPLTTGWHPALSPRAEEGDTPPS) is disordered. S108 acts as the Nucleophile in catalysis. H133 is a catalytic residue.

The protein belongs to the peptidase S14 family. Fourteen ClpP subunits assemble into 2 heptameric rings which stack back to back to give a disk-like structure with a central cavity, resembling the structure of eukaryotic proteasomes.

It is found in the cytoplasm. The enzyme catalyses Hydrolysis of proteins to small peptides in the presence of ATP and magnesium. alpha-casein is the usual test substrate. In the absence of ATP, only oligopeptides shorter than five residues are hydrolyzed (such as succinyl-Leu-Tyr-|-NHMec, and Leu-Tyr-Leu-|-Tyr-Trp, in which cleavage of the -Tyr-|-Leu- and -Tyr-|-Trp bonds also occurs).. In terms of biological role, cleaves peptides in various proteins in a process that requires ATP hydrolysis. Has a chymotrypsin-like activity. Plays a major role in the degradation of misfolded proteins. The chain is ATP-dependent Clp protease proteolytic subunit 1 from Streptomyces avermitilis (strain ATCC 31267 / DSM 46492 / JCM 5070 / NBRC 14893 / NCIMB 12804 / NRRL 8165 / MA-4680).